The primary structure comprises 35 residues: Peptide ToHyp2 (35 aa).

Pro residues predominate over residues 1–29 (LPKPPLLPPPVPGLAPGLPPLPVPDPVPH). Residues 1 to 35 (LPKPPLLPPPVPGLAPGLPPLPVPDPVPHPPKKPP) are disordered. Hydroxyproline is present on residues Pro5, Pro9, Pro10, Pro12, Pro16, Pro20, Pro31, and Pro35.

O-glycosylated; contains pentose side chains at some or all of the hydroxyproline residues. Glycosylation is required for full antifungal activity.

Functionally, antimicrobial peptide. Inhibits elongation of hyphae in B.sorokiniana (IC(50)=3.8 uM) but has no effect on this process or on germination of conidia in a panel of other phytopathogenic fungi. At concentrations above 10 uM, has antibacterial activity. The chain is Peptide ToHyp2 from Taraxacum officinale (Common dandelion).